The chain runs to 399 residues: Elongation factor Tu (399 aa).

In terms of domain architecture, tr-type G spans 10-204 (KPHVNIGTIG…AVDASIPEPE (195 aa)). The segment at 19 to 26 (GHVDHGKT) is G1. Residue 19–26 (GHVDHGKT) coordinates GTP. Thr26 contacts Mg(2+). The G2 stretch occupies residues 60-64 (GITIN). Residues 81-84 (DCPG) are G3. GTP contacts are provided by residues 81–85 (DCPGH) and 136–139 (NKCD). Residues 136-139 (NKCD) are G4. The G5 stretch occupies residues 174 to 176 (SGL).

The protein belongs to the TRAFAC class translation factor GTPase superfamily. Classic translation factor GTPase family. EF-Tu/EF-1A subfamily. Monomer.

The protein localises to the cytoplasm. The catalysed reaction is GTP + H2O = GDP + phosphate + H(+). In terms of biological role, GTP hydrolase that promotes the GTP-dependent binding of aminoacyl-tRNA to the A-site of ribosomes during protein biosynthesis. In Synechococcus sp. (strain CC9311), this protein is Elongation factor Tu.